Here is a 202-residue protein sequence, read N- to C-terminus: SEAKLKEAAKETLKTTTDPLEKLRSHCLSQGYSGLLSLGRLFRRLDKDRSWTLSKEELSRGVGQFGLDLSDGDINKLFSSFEKDGQSGINYEEFLESLRPEMTEPRKKAVEAAFKHLDKTGDGVVGLEDIKGKYSAKTHPKVVKGEATEDEILKKFLNMFETNTSVDGKVTKKEFFDYYSGLSKAIDEDEYFVSMVNIMWXX.

At serine 1 the chain carries N-acetylserine. EF-hand domains are found at residues 33–68, 69–104, 105–140, and 148–185; these read SGLL…FGLD, LSDG…EMTE, PRKK…KTHP, and TEDE…LSKA. 5 residues coordinate Ca(2+): aspartate 84, glutamate 93, aspartate 118, aspartate 122, and aspartate 129.

As to quaternary structure, monomer or disulfide-linked dimers. In terms of tissue distribution, striated muscle and brain.

Functionally, possibly acts as a regulatory protein and not as a calcium buffer or transport protein. This Faxonius limosus (Spinycheek crayfish) protein is Crustacean calcium-binding protein 23.